The chain runs to 262 residues: Trypsin theta (262 aa).

The signal sequence occupies residues 1–19; the sequence is MHGLVVLLVCLAVGSAFAG. The propeptide at 20 to 34 is activation peptide; the sequence is TIGVSNADPFEREGR. One can recognise a Peptidase S1 domain in the interval 35-260; sequence IVGGEDTTIR…LRKWILNASQ (226 aa). Cys61 and Cys77 are disulfide-bonded. Residues His76 and Asp121 each act as charge relay system in the active site. Cystine bridges form between Cys186-Cys203 and Cys212-Cys236. Ser216 (charge relay system) is an active-site residue.

It belongs to the peptidase S1 family.

It is found in the secreted. Its subcellular location is the extracellular space. It carries out the reaction Preferential cleavage: Arg-|-Xaa, Lys-|-Xaa.. This chain is Trypsin theta (thetaTry), found in Drosophila erecta (Fruit fly).